Here is a 144-residue protein sequence, read N- to C-terminus: Bradykinin-potentiating and C-type natriuretic peptides isoform 2 (144 aa).

Positions 1 to 23 are cleaved as a signal peptide; that stretch reads MVLSRLAASGLLLLALLALSVDG. A propeptide spanning residues 24–30 is cleaved from the precursor; it reads KPVQQWA. Residue Gln-31 is modified to Pyrrolidone carboxylic acid. Positions 41 to 47 are excised as a propeptide; the sequence is LLVQQWA. Gln-48 is modified (pyrrolidone carboxylic acid). The propeptide occupies 61 to 67; it reads LTVQQWA. At Gln-68 the chain carries Pyrrolidone carboxylic acid. The propeptide occupies 78 to 84; sequence LTVQQWA. The disordered stretch occupies residues 81–110; sequence QQWAQGRPPGPPIPPLTVQQWAQARPPHPP. The residue at position 85 (Gln-85) is a Pyrrolidone carboxylic acid. A propeptide spanning residues 96-102 is cleaved from the precursor; sequence LTVQQWA. Gln-103 is modified (pyrrolidone carboxylic acid). The propeptide occupies 114–116; sequence APL. At Gln-117 the chain carries Pyrrolidone carboxylic acid. Val-122 is a propeptide. The residue at position 123 (Gln-123) is a Pyrrolidone carboxylic acid. The propeptide occupies 128-144; that stretch reads VQKWAPVQKWAPLLQPT.

This sequence in the N-terminal section; belongs to the bradykinin-potentiating peptide family. In terms of tissue distribution, expressed by venom gland.

The protein localises to the secreted. The protein resides in the cytoplasm. It is found in the cytosol. Functionally, peptide with several activities. It inhibits the activity of the angiotensin-converting enzyme (ACE) by a preferential interaction with its C-domain. It evokes transient hypotension (-14 mmHg) similar to that evoked by 0.5 ug of bradykinin, when injected alone into rats. It has a high bradykinin-potentiating effect (120%), when 60 nmol of BPP-10c are coinjected with 0.5 ug of bradykinin into rats. Does not affect angiotensin-1 pressor effects. Shows potent and long-lasting antihypertensive activity as well as a reduction of the heart rate. It also binds and dose-dependently promotes the activation of cytosolic argininosuccinate synthase (ASS1), an enzyme that catalyzes the conversion of citrulline, L-aspartate and ATP to argininosuccinate, AMP and pyrophosphate. It also enhances ASS1-dependent arginine production in HEK 293 cells, as well as in spontaneous hypertensive rat (SHR) and Wistar rat plasma. In addition, it induces the production of nitric-oxide (NO) by HUVEC cells via the endothelial nitric-oxide synthase (NOS3), which use arginine as a substrate and produce NO. It has been shown to be internalized by ASS1-expressing endothelial (HUVEC) and kidney (HEK 293) cells, and is detected homogenously distributed within the cell cytoplasm for up to 2 hours. Acts as indirect hypotensive agent. Increases leukocyte rolling flux and adhesion by five-fold in post-capillary venules, without any increments in vasodilation of arterioles. Its function is as follows. Acts as indirect hypotensive agent. Potently induces vasodilation of arterioles, with only a small increase in leukocyte rolling flux. The chain is Bradykinin-potentiating and C-type natriuretic peptides isoform 2 from Bothrops jararacussu (Jararacussu).